The following is a 104-amino-acid chain: UPF0235 protein Sfri_2863 (104 aa).

Belongs to the UPF0235 family.

The sequence is that of UPF0235 protein Sfri_2863 from Shewanella frigidimarina (strain NCIMB 400).